The chain runs to 420 residues: ATP phosphoribosyltransferase regulatory subunit (420 aa).

This sequence belongs to the class-II aminoacyl-tRNA synthetase family. HisZ subfamily. Heteromultimer composed of HisG and HisZ subunits.

It localises to the cytoplasm. It participates in amino-acid biosynthesis; L-histidine biosynthesis; L-histidine from 5-phospho-alpha-D-ribose 1-diphosphate: step 1/9. In terms of biological role, required for the first step of histidine biosynthesis. May allow the feedback regulation of ATP phosphoribosyltransferase activity by histidine. The polypeptide is ATP phosphoribosyltransferase regulatory subunit (Bacillus cereus (strain AH820)).